A 307-amino-acid chain; its full sequence is Pollen allergen KBG 60 (307 aa).

An N-terminal signal peptide occupies residues 1–22 (MAVQKYTVALFLVALVVGPAAS).

This sequence belongs to the Poa p IX/Phl p VI allergen family. In terms of tissue distribution, pollen.

The sequence is that of Pollen allergen KBG 60 from Poa pratensis (Kentucky bluegrass).